A 916-amino-acid polypeptide reads, in one-letter code: MAYQPPGKDNGAQSPNYNDSGHRLEDLPHGATYEEEASTGLLSHQQGGPFGGPFDDPHQRGTSPVRPTSGYSLTETYAPDAGFHDPYSTTGSVYSGNSAENPAAAFGVPGRVASPYARSETSSTEAWRQRQAPGGGGGGGLRRYATRKVKLVQGSVLSVDYPVPSAIQNAIQAKYRNDLEGGSEEFTHMRYTAATCDPNDFTLHNGYNLRPAMYNRHTELLIAITYYNEDKTLTARTLHGVMQNIRDIVNLKKSEFWNKGGPAWQKIVVALVFDGIDPCDKDTLDVLATIGIYQDGVMKRDVDGKETVAHIFEYTTQLSVTPNQQLIRPTDDGPTTLPPVQMMFCLKQKNSKKINSHRWLFNAFGRILNPEVCILLDAGTKPGQKSLLALWEGFYNDKDLGGACGEIHAMLGKGWKNLINPLVAAQNFEYKISNILDKPLESSFGYVSVLPGAFSAYRFRAIMGRPLEQYFHGDHTLSKQLGKKGIEGMNIFKKNMFLAEDRILCFELVAKAGSKWHLSYIKASKGETDVPEGVAEFISQRRRWLNGSFAAGLYSLMHFGRMYKSGHNIIRMFFLHIQMLYNVFNTILTWFSLASYWLTTTVIMDLVGTPSESNGNKGFPFGKSATPIINTIVKYVYLGLLLLQFILALGNRPKGSRFSYLTSFVVFGIIQIYVVVDALYLVVRAFTNSDAIDFVTDQGVGEFLKSFFSSSGAGIIIIALAATFGLYFVASFMYLDPWHMFTSFPAYMFVQSSYINVLNVYAFSNWHDVSWGTKGSDKADALPSATTTKEDGGKEAVIEEIDKPQADIDSQFEATVKRALTPYVPPVEKDEKSLDDSYKSFRTRLVTLWIFSNAFLAVCITSDGMDKFGFTNTATDRTSRFFQALLWSNAAVALVRFIGACWFLGKTGLMCCFARR.

Disordered stretches follow at residues 1–84 and 114–141; these read MAYQ…AGFH and SPYA…GGGL. The N-linked (GlcNAc...) asparagine glycan is linked to Asn18. The segment covering 60 to 75 has biased composition (polar residues); sequence RGTSPVRPTSGYSLTE. Residue Asn546 is glycosylated (N-linked (GlcNAc...) asparagine). The next 7 membrane-spanning stretches (helical) occupy residues 572–594, 628–648, 663–683, 715–735, 743–763, 845–865, and 884–904; these read MFFL…FSLA, IINT…FILA, SFVV…YLVV, IIII…FMYL, SFPA…VYAF, LVTL…SDGM, and ALLW…CWFL.

This sequence belongs to the chitin synthase family. Class III subfamily.

The protein resides in the cell membrane. The catalysed reaction is [(1-&gt;4)-N-acetyl-beta-D-glucosaminyl](n) + UDP-N-acetyl-alpha-D-glucosamine = [(1-&gt;4)-N-acetyl-beta-D-glucosaminyl](n+1) + UDP + H(+). Functionally, polymerizes chitin, a structural polymer of the cell wall and septum, by transferring the sugar moiety of UDP-GlcNAc to the non-reducing end of the growing chitin polymer. Involved in hyphal growth and more particularly in branching. In Aspergillus oryzae (strain ATCC 42149 / RIB 40) (Yellow koji mold), this protein is Chitin synthase B.